The sequence spans 88 residues: Small ribosomal subunit protein uS15 (88 aa).

This sequence belongs to the universal ribosomal protein uS15 family. In terms of assembly, part of the 30S ribosomal subunit. Forms a bridge to the 50S subunit in the 70S ribosome, contacting the 23S rRNA.

Functionally, one of the primary rRNA binding proteins, it binds directly to 16S rRNA where it helps nucleate assembly of the platform of the 30S subunit by binding and bridging several RNA helices of the 16S rRNA. In terms of biological role, forms an intersubunit bridge (bridge B4) with the 23S rRNA of the 50S subunit in the ribosome. The polypeptide is Small ribosomal subunit protein uS15 (Trichlorobacter lovleyi (strain ATCC BAA-1151 / DSM 17278 / SZ) (Geobacter lovleyi)).